Consider the following 1370-residue polypeptide: DNA-directed RNA polymerase subunit beta (1370 aa).

It belongs to the RNA polymerase beta chain family. The RNAP catalytic core consists of 2 alpha, 1 beta, 1 beta' and 1 omega subunit. When a sigma factor is associated with the core the holoenzyme is formed, which can initiate transcription.

It carries out the reaction RNA(n) + a ribonucleoside 5'-triphosphate = RNA(n+1) + diphosphate. Functionally, DNA-dependent RNA polymerase catalyzes the transcription of DNA into RNA using the four ribonucleoside triphosphates as substrates. This chain is DNA-directed RNA polymerase subunit beta, found in Verminephrobacter eiseniae (strain EF01-2).